The following is a 217-amino-acid chain: Membrane-associated progesterone receptor component 2 (217 aa).

A glycan (O-linked (Xyl...) (chondroitin sulfate) serine) is linked at serine 15. The helical transmembrane segment at 40-62 (ALLATGGEMLLNVALVALVLLGA) threads the bilayer. Residues serine 84, serine 98, and serine 202 each carry the phosphoserine modification. The 100-residue stretch at 96-195 (DFSLEQLRQY…EKYDYVGRLL (100 aa)) folds into the Cytochrome b5 heme-binding domain. Residues 196–217 (KPGEEPSEYTDEEDTKDHSKQD) are disordered. Residues 200–209 (EPSEYTDEED) show a composition bias toward acidic residues. Tyrosine 204 is modified (phosphotyrosine). Residue threonine 205 is modified to Phosphothreonine.

Belongs to the cytochrome b5 family. MAPR subfamily. As to quaternary structure, interacts with PGRMC1. Interacts with AAAS. As to expression, expressed in brown adipose tissue, white adipose tissue, liver, heart, skeletal muscle, brain and adrenal gland.

Its subcellular location is the membrane. It localises to the nucleus envelope. The protein resides in the endoplasmic reticulum. The protein localises to the secreted. Required for the maintenance of uterine histoarchitecture and normal female reproductive lifespan. May serve as a universal non-classical progesterone receptor in the uterus. Intracellular heme chaperone required for delivery of labile, or signaling heme, to the nucleus. Plays a role in adipocyte function and systemic glucose homeostasis. In brown fat, which has a high demand for heme, delivery of labile heme in the nucleus regulates the activity of heme-responsive transcriptional repressors such as NR1D1 and BACH1. In Mus musculus (Mouse), this protein is Membrane-associated progesterone receptor component 2.